The sequence spans 988 residues: Band 4.1-like protein 2 (988 aa).

The disordered stretch occupies residues 1–190 (MTTEVGSASE…GAAKRETKEV (190 aa)). At Thr-2 the chain carries N-acetylthreonine. Ser-7 carries the post-translational modification Phosphoserine. The segment covering 22-31 (ASKEKAKEVE) has biased composition (basic and acidic residues). 3 positions are modified to phosphoserine: Ser-38, Ser-86, and Ser-116. 2 stretches are compositionally biased toward basic and acidic residues: residues 110-148 (ILGK…EAKP) and 160-190 (EEVR…TKEV). Residues Ser-201, Ser-379, Ser-395, Ser-492, Ser-543, Ser-555, Ser-561, and Ser-582 each carry the phosphoserine modification. Residues 211–492 (VLAKVTLLDG…EHHTFYRLVS (282 aa)) enclose the FERM domain. The tract at residues 495 to 651 (QPPKTKFLTL…TPEPRPSEWE (157 aa)) is hydrophilic. The tract at residues 514–594 (TQAQTREAST…KATPLPAEGK (81 aa)) is disordered. A compositionally biased stretch (low complexity) spans 555 to 567 (SPPGEGSVPGPGV). Tyr-606 carries the post-translational modification Phosphotyrosine. Phosphoserine occurs at positions 610 and 630. 2 disordered regions span residues 639-788 (MAST…QAGA) and 804-839 (QKLP…VPHL). The spectrin--actin-binding stretch occupies residues 652–837 (KRRVTPLPFQ…DPHRVNGEVP (186 aa)). Residues 673-686 (VEEKKRAEVGKDES) are compositionally biased toward basic and acidic residues. Phosphoserine is present on Ser-698. Positions 704 to 717 (GETRKVEPVAHKDS) are enriched in basic and acidic residues. Residues 718–729 (TSLSSESSSSSS) are compositionally biased toward low complexity. The segment covering 739–751 (QPHHRVTEGTIRE) has biased composition (basic and acidic residues). Thr-745 bears the Phosphothreonine mark. Over residues 752 to 764 (EQEECDEELEEEP) the composition is skewed to acidic residues. Positions 828-839 (DPHRVNGEVPHL) are enriched in basic and acidic residues. The C-terminal (CTD) stretch occupies residues 838–988 (HLDLDGLPEI…ETELAEEGEE (151 aa)).

Interacts with FCGR1A. Interacts with TRPC4. Interacts (via CTD domain) with FKBP2. Interacts with NUMA1; this interaction is negatively regulated by CDK1 during metaphase and promotes anaphase-specific localization of NUMA1 in symmetrically dividing cells. As to expression, widely expressed.

It localises to the cytoplasm. It is found in the cytoskeleton. The protein localises to the cell cortex. Its subcellular location is the cell membrane. In terms of biological role, required for dynein-dynactin complex and NUMA1 recruitment at the mitotic cell cortex during anaphase. This is Band 4.1-like protein 2 from Mus musculus (Mouse).